The following is a 392-amino-acid chain: MVLQAIKYSRGQLEILDQLKLPHAEEYDHIYSSTDAWHAIKEMRTRGAPAIAIVAALALAVELSNMKLPSVAEEVKVFITEKLDYLVTSRPTAVNLADAAGKLQRITESAAASEGADGDSVREAYVSAAEKMLVDDVSDNESIGKHGAEWIMKNTEAGKKGPVSMMTHCNTGSLATAGYGTALGVIRSLHSAGSLKHAFCSETRPYNQGSRLTAFELVHDKIPATLITDSMAAALLRLRGESENIAGIVVGADRVAANGDTANKIGTYSLAILAKHHGVKFLVAAPRTTIDLKTKSGADIVIEERSGKEVTLVKGPRHDGVTLDLGVIETISIAANGIGVWNPAFDVTPAELIDGIITEVGVVEKDSNGVFHLDTVFKAEGSEVKPSTIGGL.

Aspartate 253 functions as the Proton donor in the catalytic mechanism.

This sequence belongs to the eIF-2B alpha/beta/delta subunits family. MtnA subfamily.

Its subcellular location is the cytoplasm. It is found in the nucleus. It carries out the reaction 5-(methylsulfanyl)-alpha-D-ribose 1-phosphate = 5-(methylsulfanyl)-D-ribulose 1-phosphate. The protein operates within amino-acid biosynthesis; L-methionine biosynthesis via salvage pathway; L-methionine from S-methyl-5-thio-alpha-D-ribose 1-phosphate: step 1/6. Catalyzes the interconversion of methylthioribose-1-phosphate (MTR-1-P) into methylthioribulose-1-phosphate (MTRu-1-P). In Pyrenophora tritici-repentis (strain Pt-1C-BFP) (Wheat tan spot fungus), this protein is Methylthioribose-1-phosphate isomerase (mri1).